Consider the following 732-residue polypeptide: MGRREEMIAKIKELMLQPERIRNIGIAAHIDHGKTTLSDNLLAGAGMISEELAGKQLVLDFDEQEQARGITINAANVSMVHNYEGKDYLINLIDTPGHVDFGGDVTRAMRAIDGVIIVVDAVEGVMPQTETVVRQALREYVKPVLFINKVDRLIRELKLTPQQMMERFSKIIMDVNRLIQRYAPEEYKKKWMVRVEDGSVAFGSAYYNWALSVPFMQRTGVKFNEIIDLTLKGDNKTLRQRAPLHVVVLDMVVRHLPSPIEAQKYRIPHLWQGDINSKIGQAMLNCDPKGKMVMVITKIIIDKHAGEVATGRVWSGTVRSGQEVYLINSKRKGRIQQVGIYMGPERINMEAVPAGNIVAVTGLRDAMAGETVAEEQIEPFEALHYVSEPVVTVAIEAKNVKDLPRLIEALRQLAKEDPTLHVKIDEETGQHLLSGMGELHLEVKLYKLQKDWGIEVDVSEPIVVYRESITKPSPIVEGKSPNKHNRFYVVVEPMPDEIYQAIKEGIIPEGRVKDPKAVAKKLAELGMDYDIARGVVDIYNGNMFLDNTKGIQYLNEVMDLLIDGFHQAMDEGPLAKEPVMKVIVRLVDAQVHEDNVHRGPAQIYPAIRTAIHCAMMKAGPVLYEPYQKVIINIPYEYMGAVSREISQRRGQLIDMRQEGEVMTIIAEAPVAEMFGFAGAIRSATSGRALWSTEHAGFKRVPNELAQQIIRQIRQRKGLDPNPPTEKDVCPLF.

The region spanning 19–260 (ERIRNIGIAA…MVVRHLPSPI (242 aa)) is the tr-type G domain. Residues 28–35 (AHIDHGKT), 94–98 (DTPGH), and 148–151 (NKVD) contribute to the GTP site. A Diphthamide modification is found at H597.

This sequence belongs to the TRAFAC class translation factor GTPase superfamily. Classic translation factor GTPase family. EF-G/EF-2 subfamily.

The protein resides in the cytoplasm. Functionally, catalyzes the GTP-dependent ribosomal translocation step during translation elongation. During this step, the ribosome changes from the pre-translocational (PRE) to the post-translocational (POST) state as the newly formed A-site-bound peptidyl-tRNA and P-site-bound deacylated tRNA move to the P and E sites, respectively. Catalyzes the coordinated movement of the two tRNA molecules, the mRNA and conformational changes in the ribosome. This Pyrococcus furiosus (strain ATCC 43587 / DSM 3638 / JCM 8422 / Vc1) protein is Elongation factor 2 (fusA).